Reading from the N-terminus, the 364-residue chain is Anhydro-N-acetylmuramic acid kinase (364 aa).

11–18 (GSSLDGID) is an ATP binding site.

It belongs to the anhydro-N-acetylmuramic acid kinase family.

It catalyses the reaction 1,6-anhydro-N-acetyl-beta-muramate + ATP + H2O = N-acetyl-D-muramate 6-phosphate + ADP + H(+). It functions in the pathway amino-sugar metabolism; 1,6-anhydro-N-acetylmuramate degradation. Its pathway is cell wall biogenesis; peptidoglycan recycling. In terms of biological role, catalyzes the specific phosphorylation of 1,6-anhydro-N-acetylmuramic acid (anhMurNAc) with the simultaneous cleavage of the 1,6-anhydro ring, generating MurNAc-6-P. Is required for the utilization of anhMurNAc either imported from the medium or derived from its own cell wall murein, and thus plays a role in cell wall recycling. The protein is Anhydro-N-acetylmuramic acid kinase of Pseudomonas syringae pv. tomato (strain ATCC BAA-871 / DC3000).